An 897-amino-acid polypeptide reads, in one-letter code: Coiled-coil domain-containing protein lobo (897 aa).

Positions 27-49 (EIDEQRRSQGSESDFADEMEGEF) are disordered. The span at 40-49 (DFADEMEGEF) shows a compositional bias: acidic residues. 2 coiled-coil regions span residues 269-306 (DLKSHLEEDMAEVHRQKEAEEKRIQDEIIRKQMEDLEL) and 801-858 (SLLN…QRLT).

Belongs to the DRC7 family. In terms of tissue distribution, testis-specific (at protein level).

The protein resides in the cell projection. The protein localises to the cilium. It is found in the flagellum. It localises to the cytoplasm. Its subcellular location is the cytoskeleton. The protein resides in the cilium axoneme. Functionally, key component of the nexin-dynein regulatory complex (N-DRC), essential for N-DRC integrity. Involved in the regulation of flagellar motility. Involved in sperm motility. Required for the sperm to enter in the coiled storage seminal receptacle (SR) tubule. This chain is Coiled-coil domain-containing protein lobo (lobo), found in Drosophila melanogaster (Fruit fly).